The following is a 198-amino-acid chain: Na(+)-translocating NADH-quinone reductase subunit E (198 aa).

The next 6 membrane-spanning stretches (helical) occupy residues 11–31 (SIFI…FLAV), 39–59 (MGLG…NNLI), 77–97 (FLSF…LEMA), 110–130 (GIFL…SFMV), 140–160 (VVYG…MAGI), and 176–196 (LGIT…FSGI).

Belongs to the NqrDE/RnfAE family. In terms of assembly, composed of six subunits; NqrA, NqrB, NqrC, NqrD, NqrE and NqrF.

The protein localises to the cell inner membrane. It catalyses the reaction a ubiquinone + n Na(+)(in) + NADH + H(+) = a ubiquinol + n Na(+)(out) + NAD(+). Its function is as follows. NQR complex catalyzes the reduction of ubiquinone-1 to ubiquinol by two successive reactions, coupled with the transport of Na(+) ions from the cytoplasm to the periplasm. NqrA to NqrE are probably involved in the second step, the conversion of ubisemiquinone to ubiquinol. The protein is Na(+)-translocating NADH-quinone reductase subunit E of Aeromonas hydrophila subsp. hydrophila (strain ATCC 7966 / DSM 30187 / BCRC 13018 / CCUG 14551 / JCM 1027 / KCTC 2358 / NCIMB 9240 / NCTC 8049).